The primary structure comprises 259 residues: uncharacterized protein (259 aa).

An N-terminal signal peptide occupies residues 1 to 22 (MKHSKKLLLCISFLLITVFISG). Cysteine 23 is lipidated: N-palmitoyl cysteine. The S-diacylglycerol cysteine moiety is linked to residue cysteine 23.

It belongs to the staphylococcal tandem lipoprotein family.

It is found in the cell membrane. This is an uncharacterized protein from Staphylococcus epidermidis (strain ATCC 35984 / DSM 28319 / BCRC 17069 / CCUG 31568 / BM 3577 / RP62A).